Reading from the N-terminus, the 207-residue chain is Phenazine biosynthesis protein PhzD (207 aa).

The Proton donor role is filled by Asp-38. Residues Gln-78, Arg-87, Lys-122, and 151-155 (YAHVG) contribute to the substrate site.

It belongs to the isochorismatase family. As to quaternary structure, homodimer.

It carries out the reaction (2S)-2-amino-4-deoxychorismate + H2O = (5S,6S)-6-amino-5-hydroxycyclohexa-1,3-diene-1-carboxyate + pyruvate. It functions in the pathway antibiotic biosynthesis; phenazine biosynthesis. Involved in the biosynthesis of the antibiotic phenazine, a nitrogen-containing heterocyclic molecule having important roles in virulence, competition and biological control. Catalyzes the hydrolysis of the vinyl ether functional group of 2-amino-2-deoxyisochorismate (ADIC), yielding pyruvate and trans-2,3-dihydro-3-hydroxyanthranilic acid (DHHA). The chain is Phenazine biosynthesis protein PhzD from Pseudomonas fluorescens.